The chain runs to 37 residues: uncharacterized protein (37 aa).

A helical transmembrane segment spans residues 16–36; sequence FALIVVLFILLIIVGTAFVGG.

Belongs to the SscA family.

The protein localises to the membrane. This is an uncharacterized protein from Bacillus subtilis (strain 168).